Consider the following 66-residue polypeptide: Beta-mammal toxin Css2 (66 aa).

The region spanning 1–66 (KEGYLVSKST…VWPLPNKTCN (66 aa)) is the LCN-type CS-alpha/beta domain. 4 cysteine pairs are disulfide-bonded: Cys-12/Cys-65, Cys-16/Cys-41, Cys-25/Cys-46, and Cys-29/Cys-48. An Asparagine amide modification is found at Asn-66.

The protein belongs to the long (4 C-C) scorpion toxin superfamily. Sodium channel inhibitor family. Beta subfamily. Post-translationally, C-terminal amidation increases its affinity for sodium channels. As to expression, expressed by the venom gland.

It is found in the secreted. Functionally, beta toxin that binds site-4 of sodium channels (Nav) and reduces peak current (observed on Nav1.6/SCN8A (IC(50)=307 nM)), shifts the voltage of activation toward more negative potentials (observed on Nav1.6, Nav1.1 (weak), Nav1.2 (weak), and Nav1.7 (weak)), and induces resurgent currents at negative voltages following brief and strong depolarizations (observed on Nav1.6, Nav1.1 (weak), and Nav1.7 (weak)). A reduction of peak current of Nav1.5/SCN7A has been observed in another study (IC(50)=35-40 nM). This toxin is only active on mammals. It has been shown to bind phospholipids. The polypeptide is Beta-mammal toxin Css2 (Centruroides suffusus (Durango bark scorpion)).